A 219-amino-acid chain; its full sequence is NAD(P)H-quinone oxidoreductase subunit K 2 (219 aa).

Cys-53, Cys-54, Cys-118, and Cys-149 together coordinate [4Fe-4S] cluster.

This sequence belongs to the complex I 20 kDa subunit family. As to quaternary structure, NDH-1 can be composed of about 15 different subunits; different subcomplexes with different compositions have been identified which probably have different functions. [4Fe-4S] cluster is required as a cofactor.

The protein localises to the cellular thylakoid membrane. The catalysed reaction is a plastoquinone + NADH + (n+1) H(+)(in) = a plastoquinol + NAD(+) + n H(+)(out). The enzyme catalyses a plastoquinone + NADPH + (n+1) H(+)(in) = a plastoquinol + NADP(+) + n H(+)(out). In terms of biological role, NDH-1 shuttles electrons from an unknown electron donor, via FMN and iron-sulfur (Fe-S) centers, to quinones in the respiratory and/or the photosynthetic chain. The immediate electron acceptor for the enzyme in this species is believed to be plastoquinone. Couples the redox reaction to proton translocation, and thus conserves the redox energy in a proton gradient. Cyanobacterial NDH-1 also plays a role in inorganic carbon-concentration. The sequence is that of NAD(P)H-quinone oxidoreductase subunit K 2 from Synechocystis sp. (strain ATCC 27184 / PCC 6803 / Kazusa).